Reading from the N-terminus, the 194-residue chain is CASP-like protein 4D1 (194 aa).

Over 1-10 (MASRTVLLPS) the chain is Cytoplasmic. The helical transmembrane segment at 11–31 (AVLILRLLSLGLLAASLALIA) threads the bilayer. The Extracellular segment spans residues 32–55 (ADKLNVDSDPPQRYTFRDVYAYRY). Residues 56–76 (VLAVAVIGCAYTLLQLPLAAV) form a helical membrane-spanning segment. Residues 77 to 94 (SIIASGNNKRGIGAGGGS) are Cytoplasmic-facing. Residues 95–115 (VAVALLVLVLLADVVFALLLA) form a helical membrane-spanning segment. Residues 116 to 161 (TGAAAGFAFTYDVKRYLDGQFDDDSIGTPEVDKLHRDMDKFFDLAY) are Extracellular-facing. A helical membrane pass occupies residues 162-182 (AAAGLMLAAAACMALVIMLSV). The Cytoplasmic portion of the chain corresponds to 183–194 (YSLARQVRSDYI).

The protein belongs to the Casparian strip membrane proteins (CASP) family. In terms of assembly, homodimer and heterodimers.

Its subcellular location is the cell membrane. This is CASP-like protein 4D1 from Sorghum bicolor (Sorghum).